A 491-amino-acid polypeptide reads, in one-letter code: Ketol-acid reductoisomerase (NADP(+)) (491 aa).

The 194-residue stretch at 15 to 208 folds into the KARI N-terminal Rossmann domain; the sequence is AQLGKCRFMG…GGHRAGVLES (194 aa). NADP(+)-binding positions include 45-48, arginine 68, arginine 76, serine 78, and 108-110; these read CGAQ and DKQ. Histidine 132 is an active-site residue. Residue glycine 158 participates in NADP(+) binding. KARI C-terminal knotted domains are found at residues 209 to 344 and 345 to 484; these read SFVA…TAPQ and YEGK…MTDM. Positions 217, 221, 389, and 393 each coordinate Mg(2+). Position 414 (serine 414) interacts with substrate.

It belongs to the ketol-acid reductoisomerase family. The cofactor is Mg(2+).

The catalysed reaction is (2R)-2,3-dihydroxy-3-methylbutanoate + NADP(+) = (2S)-2-acetolactate + NADPH + H(+). The enzyme catalyses (2R,3R)-2,3-dihydroxy-3-methylpentanoate + NADP(+) = (S)-2-ethyl-2-hydroxy-3-oxobutanoate + NADPH + H(+). It functions in the pathway amino-acid biosynthesis; L-isoleucine biosynthesis; L-isoleucine from 2-oxobutanoate: step 2/4. Its pathway is amino-acid biosynthesis; L-valine biosynthesis; L-valine from pyruvate: step 2/4. Involved in the biosynthesis of branched-chain amino acids (BCAA). Catalyzes an alkyl-migration followed by a ketol-acid reduction of (S)-2-acetolactate (S2AL) to yield (R)-2,3-dihydroxy-isovalerate. In the isomerase reaction, S2AL is rearranged via a Mg-dependent methyl migration to produce 3-hydroxy-3-methyl-2-ketobutyrate (HMKB). In the reductase reaction, this 2-ketoacid undergoes a metal-dependent reduction by NADPH to yield (R)-2,3-dihydroxy-isovalerate. The chain is Ketol-acid reductoisomerase (NADP(+)) from Salmonella typhimurium (strain LT2 / SGSC1412 / ATCC 700720).